The primary structure comprises 111 residues: Nucleoid-associated protein PputGB1_3833 (111 aa).

Disordered stretches follow at residues 1 to 25 and 87 to 111; these read MMKG…KMQE and EQSS…KMPF.

Belongs to the YbaB/EbfC family. In terms of assembly, homodimer.

The protein resides in the cytoplasm. It is found in the nucleoid. Binds to DNA and alters its conformation. May be involved in regulation of gene expression, nucleoid organization and DNA protection. This Pseudomonas putida (strain GB-1) protein is Nucleoid-associated protein PputGB1_3833.